The following is a 250-amino-acid chain: Large ribosomal subunit protein uL30B (250 aa).

It belongs to the universal ribosomal protein uL30 family. Component of the large ribosomal subunit (LSU). Mature yeast ribosomes consist of a small (40S) and a large (60S) subunit. The 40S small subunit contains 1 molecule of ribosomal RNA (18S rRNA) and at least 33 different proteins. The large 60S subunit contains 3 rRNA molecules (25S, 5.8S and 5S rRNA) and at least 46 different proteins.

It localises to the cytoplasm. Its subcellular location is the nucleus. It is found in the nucleolus. Functionally, component of the ribosome, a large ribonucleoprotein complex responsible for the synthesis of proteins in the cell. The small ribosomal subunit (SSU) binds messenger RNAs (mRNAs) and translates the encoded message by selecting cognate aminoacyl-transfer RNA (tRNA) molecules. The large subunit (LSU) contains the ribosomal catalytic site termed the peptidyl transferase center (PTC), which catalyzes the formation of peptide bonds, thereby polymerizing the amino acids delivered by tRNAs into a polypeptide chain. The nascent polypeptides leave the ribosome through a tunnel in the LSU and interact with protein factors that function in enzymatic processing, targeting, and the membrane insertion of nascent chains at the exit of the ribosomal tunnel. This is Large ribosomal subunit protein uL30B (rpl702) from Schizosaccharomyces pombe (strain 972 / ATCC 24843) (Fission yeast).